We begin with the raw amino-acid sequence, 512 residues long: Intermediate filament family orphan 2 (512 aa).

Residues 50–479 (NIHLLKGLNV…RLIKGSADRN (430 aa)) enclose the IF rod domain. Residues 473–512 (KGSADRNSPSPSSVASSDSGSTDEIQEDLEREADVEPMVS) are disordered. Over residues 480–492 (SPSPSSVASSDSG) the composition is skewed to low complexity. Positions 496–512 (EIQEDLEREADVEPMVS) are enriched in acidic residues.

This sequence belongs to the intermediate filament family.

The polypeptide is Intermediate filament family orphan 2 (Iffo2) (Mus musculus (Mouse)).